The sequence spans 355 residues: MSPCGRALHTSRGAMAMLARKFPRTRLPVGASALCVVVLCWLYIFPVYRLPNEKEIVQGVLAQRTAWRTNQTSASLFRRQMEDCCDPAHLFAMTKMNSPMGKSLWYDGELLYSFTIDNSTYSLFPQATPFQLPLKKCAVVGNGGILKMSGCGRQIDEANFVMRCNLPPLSSEYTRDVGSKTQLVTANPSIIRQRFENLLWSRKKFVDNMKIYNHSYIYMPAFSMKTGTEPSLRVYYTLKDVGANQTVLFANPNFLRNIGKFWKSRGIHAKRLSTGLFLVSAALGLCEEVSIYGFWPFSVNMQGDPISHHYYDNVLPFSGYHAMPEEFLQLWYLHKIGALRMQLDPCEEPSPQPTS.

Residues 1-28 (MSPCGRALHTSRGAMAMLARKFPRTRLP) are Cytoplasmic-facing. Residues 29–47 (VGASALCVVVLCWLYIFPV) form a helical; Signal-anchor for type II membrane protein membrane-spanning segment. The Lumenal segment spans residues 48 to 355 (YRLPNEKEIV…CEEPSPQPTS (308 aa)). N-linked (GlcNAc...) asparagine glycosylation is found at Asn70 and Asn118. 2 disulfide bridges follow: Cys137–Cys286 and Cys151–Cys346. Residues Asn142 and Asn165 each contribute to the CMP-N-acetyl-beta-neuraminate site. N-linked (GlcNAc...) asparagine glycosylation is found at Asn213 and Asn244. Positions 273, 274, 275, 295, and 309 each coordinate CMP-N-acetyl-beta-neuraminate. His321 (proton donor/acceptor) is an active-site residue.

The protein belongs to the glycosyltransferase 29 family.

Its subcellular location is the golgi apparatus membrane. The enzyme catalyses an N-acetyl-alpha-neuraminyl-(2-&gt;3)-beta-D-galactosyl derivative + CMP-N-acetyl-beta-neuraminate = an N-acetyl-alpha-neuraminyl-(2-&gt;8)-N-acetyl-alpha-neuraminyl-(2-&gt;3)-beta-D-galactosyl derivative + CMP + H(+). It carries out the reaction a ganglioside GM3 (d18:1(4E)) + CMP-N-acetyl-beta-neuraminate = a ganglioside GD3 (d18:1(4E)) + CMP + H(+). It catalyses the reaction a ganglioside GD3 (d18:1(4E)) + CMP-N-acetyl-beta-neuraminate = a ganglioside GT3 (d18:1(4E)) + CMP + H(+). The catalysed reaction is a ganglioside GD1a (d18:1(4E)) + CMP-N-acetyl-beta-neuraminate = a ganglioside GT1a (d18:1(4E)) + CMP + H(+). The enzyme catalyses a ganglioside GT1b (d18:1(4E)) + CMP-N-acetyl-beta-neuraminate = a ganglioside GQ1b (d18:1(4E)) + CMP + H(+). It carries out the reaction a ganglioside GM1b (d18:1(4E)) + CMP-N-acetyl-beta-neuraminate = a ganglioside GD1c (d18:1(4E)) + CMP + H(+). It catalyses the reaction a ganglioside GD3 + CMP-N-acetyl-beta-neuraminate = a ganglioside GT3 + CMP + H(+). The catalysed reaction is [alpha-N-acetylneuraminyl-(2-&gt;8)](n)-alpha-N-acetylneuraminyl-(2-&gt;8)-alpha-N-acetylneuraminyl-(2-&gt;3)-beta-D-galactosyl-(1-&gt;4)-beta-D-glucosyl-(1&lt;-&gt;1)-ceramide + CMP-N-acetyl-beta-neuraminate = [alpha-N-acetylneuraminyl-(2-&gt;8)](n+1)-alpha-N-acetylneuraminyl-(2-&gt;8)-alpha-N-acetylneuraminyl-(2-&gt;3)-beta-D-galactosyl-(1-&gt;4)-beta-D-glucosyl-(1&lt;-&gt;1)-ceramide + CMP + H(+). It functions in the pathway protein modification; protein glycosylation. It participates in lipid metabolism; sphingolipid metabolism. Catalyzes the addition of sialic acid in alpha 2,8-linkage to the sialic acid moiety of the ganglioside GM3 to form ganglioside GD3; gangliosides are a subfamily of complex glycosphingolipds that contain one or more residues of sialic acid. Can catalyze the addition of a second alpha-2,8- sialic acid to GD3 to form GT3. Can use GM1b, GD1a and GT1b as acceptor substrates to synthesize GD1c, GT1a and GQ1b respectively. The protein is Alpha-N-acetylneuraminide alpha-2,8-sialyltransferase of Mus musculus (Mouse).